The chain runs to 310 residues: HTH-type transcriptional regulator PunR (310 aa).

One can recognise an HTH lysR-type domain in the interval 2–59 (WSEYSLEVVDAVARNGSFSAAAQELHRVPSAVSYTVRQLEEWLAVPLFERRHRDVELT). The H-T-H motif DNA-binding region spans 19 to 38 (FSAAAQELHRVPSAVSYTVR).

Belongs to the LysR transcriptional regulatory family.

Its subcellular location is the cytoplasm. In terms of biological role, transcriptional regulator that activates the expression of punC, which encodes a purine nucleoside transporter. The polypeptide is HTH-type transcriptional regulator PunR (Escherichia coli O157:H7).